A 2174-amino-acid polypeptide reads, in one-letter code: Mediator of RNA polymerase II transcription subunit 13 (2174 aa).

Serine 395 is subject to Phosphoserine. The segment at 435-477 (RNAGQQGQAPSLGQQQQILPKHKTNEKQEKSEKPQKRPLTPFH) is disordered. A compositionally biased stretch (low complexity) spans 438–451 (GQQGQAPSLGQQQQ). The span at 457–469 (KTNEKQEKSEKPQ) shows a compositional bias: basic and acidic residues. Phosphoserine is present on residues serine 500, serine 504, serine 530, and serine 537. Positions 709-730 (FPDKKDRQNSEREAGKKHKVED) are enriched in basic and acidic residues. Disordered stretches follow at residues 709 to 735 (FPDK…TSSV), 749 to 769 (SPSI…PSTS), and 787 to 816 (FNSD…ESKT). The span at 805-815 (SDDKASCKESK) shows a compositional bias: basic and acidic residues. Phosphoserine is present on residues serine 826 and serine 890. A disordered region spans residues 959 to 1054 (FIKEGDGSNM…ASTPSTCRPL (96 aa)). Residues 992-1003 (PPSNSGAGILPS) are compositionally biased toward low complexity. Residues 1004–1015 (PSTPRFPTPRTP) are compositionally biased toward pro residues. Serine 1029 carries the post-translational modification Phosphoserine. Over residues 1040-1053 (DLYSPASTPSTCRP) the composition is skewed to polar residues. 2 short sequence motifs (LXXLL motif) span residues 1188 to 1192 (LILLL) and 1279 to 1283 (LRMLL). Polar residues-rich tracts occupy residues 1484 to 1498 (SQSL…NTGN) and 1563 to 1606 (SMNS…SLPT). Disordered stretches follow at residues 1484–1505 (SQSL…PSAT), 1557–1617 (SFPP…ESTM), and 2015–2048 (LPAS…RLLS).

Belongs to the Mediator complex subunit 13 family. In terms of assembly, component of the Mediator complex, which is composed of MED1, MED4, MED6, MED7, MED8, MED9, MED10, MED11, MED12, MED13, MED13L, MED14, MED15, MED16, MED17, MED18, MED19, MED20, MED21, MED22, MED23, MED24, MED25, MED26, MED27, MED29, MED30, MED31, CCNC, CDK8 and CDC2L6/CDK11. The MED12, MED13, CCNC and CDK8 subunits form a distinct module termed the CDK8 module. Mediator containing the CDK8 module is less active than Mediator lacking this module in supporting transcriptional activation. Individual preparations of the Mediator complex lacking one or more distinct subunits have been variously termed ARC, CRSP, DRIP, PC2, SMCC and TRAP. As to expression, ubiquitous.

It is found in the nucleus. In terms of biological role, component of the Mediator complex, a coactivator involved in the regulated transcription of nearly all RNA polymerase II-dependent genes. Mediator functions as a bridge to convey information from gene-specific regulatory proteins to the basal RNA polymerase II transcription machinery. Mediator is recruited to promoters by direct interactions with regulatory proteins and serves as a scaffold for the assembly of a functional preinitiation complex with RNA polymerase II and the general transcription factors. The chain is Mediator of RNA polymerase II transcription subunit 13 from Homo sapiens (Human).